Here is a 292-residue protein sequence, read N- to C-terminus: NAD kinase (292 aa).

D72 (proton acceptor) is an active-site residue. NAD(+)-binding positions include 72–73, 146–147, H157, R174, D176, and 187–192; these read DG, NE, and TAYALS.

Belongs to the NAD kinase family. The cofactor is a divalent metal cation.

The protein resides in the cytoplasm. It catalyses the reaction NAD(+) + ATP = ADP + NADP(+) + H(+). Its function is as follows. Involved in the regulation of the intracellular balance of NAD and NADP, and is a key enzyme in the biosynthesis of NADP. Catalyzes specifically the phosphorylation on 2'-hydroxyl of the adenosine moiety of NAD to yield NADP. The chain is NAD kinase from Shewanella oneidensis (strain ATCC 700550 / JCM 31522 / CIP 106686 / LMG 19005 / NCIMB 14063 / MR-1).